The chain runs to 504 residues: uncharacterized protein (504 aa).

Positions 1–212 (MFMKSKAAGS…LYKTQDPVLD (212 aa)) are excised as a propeptide.

This is an uncharacterized protein from Deinococcus radiodurans (strain ATCC 13939 / DSM 20539 / JCM 16871 / CCUG 27074 / LMG 4051 / NBRC 15346 / NCIMB 9279 / VKM B-1422 / R1).